The following is an 891-amino-acid chain: DNA mismatch repair protein MutS (891 aa).

646-653 (GPNMAGKS) is a binding site for ATP.

This sequence belongs to the DNA mismatch repair MutS family.

Functionally, this protein is involved in the repair of mismatches in DNA. It is possible that it carries out the mismatch recognition step. This protein has a weak ATPase activity. The chain is DNA mismatch repair protein MutS from Rickettsia canadensis (strain McKiel).